The chain runs to 89 residues: Small ribosomal subunit protein uS15 (89 aa).

This sequence belongs to the universal ribosomal protein uS15 family. In terms of assembly, part of the 30S ribosomal subunit. Forms a bridge to the 50S subunit in the 70S ribosome, contacting the 23S rRNA.

One of the primary rRNA binding proteins, it binds directly to 16S rRNA where it helps nucleate assembly of the platform of the 30S subunit by binding and bridging several RNA helices of the 16S rRNA. Its function is as follows. Forms an intersubunit bridge (bridge B4) with the 23S rRNA of the 50S subunit in the ribosome. This is Small ribosomal subunit protein uS15 from Mycobacterium marinum (strain ATCC BAA-535 / M).